Reading from the N-terminus, the 192-residue chain is Pyridoxal 5'-phosphate synthase subunit PdxT (192 aa).

An L-glutamine-binding site is contributed by 53–55; the sequence is GES. Cys85 acts as the Nucleophile in catalysis. Residues Arg112 and 140–141 each bind L-glutamine; that span reads IR. Residues His176 and Glu178 each act as charge relay system in the active site.

It belongs to the glutaminase PdxT/SNO family. As to quaternary structure, in the presence of PdxS, forms a dodecamer of heterodimers. Only shows activity in the heterodimer.

The enzyme catalyses aldehydo-D-ribose 5-phosphate + D-glyceraldehyde 3-phosphate + L-glutamine = pyridoxal 5'-phosphate + L-glutamate + phosphate + 3 H2O + H(+). It carries out the reaction L-glutamine + H2O = L-glutamate + NH4(+). It participates in cofactor biosynthesis; pyridoxal 5'-phosphate biosynthesis. In terms of biological role, catalyzes the hydrolysis of glutamine to glutamate and ammonia as part of the biosynthesis of pyridoxal 5'-phosphate. The resulting ammonia molecule is channeled to the active site of PdxS. In Natronomonas pharaonis (strain ATCC 35678 / DSM 2160 / CIP 103997 / JCM 8858 / NBRC 14720 / NCIMB 2260 / Gabara) (Halobacterium pharaonis), this protein is Pyridoxal 5'-phosphate synthase subunit PdxT.